The chain runs to 826 residues: Leucine--tRNA ligase (826 aa).

Residues 41–51 (PYPSGKLHMGH) carry the 'HIGH' region motif. The 'KMSKS' region signature appears at 586 to 590 (KMSKS). ATP is bound at residue K589.

Belongs to the class-I aminoacyl-tRNA synthetase family.

It is found in the cytoplasm. It catalyses the reaction tRNA(Leu) + L-leucine + ATP = L-leucyl-tRNA(Leu) + AMP + diphosphate. In Natranaerobius thermophilus (strain ATCC BAA-1301 / DSM 18059 / JW/NM-WN-LF), this protein is Leucine--tRNA ligase.